Consider the following 660-residue polypeptide: 1-deoxy-D-xylulose-5-phosphate synthase (660 aa).

Thiamine diphosphate contacts are provided by residues His-86 and 127 to 129; that span reads AHS. Asp-164 provides a ligand contact to Mg(2+). Thiamine diphosphate-binding positions include 165–166, Asn-196, Tyr-306, and Glu-388; that span reads GS. Position 196 (Asn-196) interacts with Mg(2+).

It belongs to the transketolase family. DXPS subfamily. In terms of assembly, homodimer. Mg(2+) serves as cofactor. The cofactor is thiamine diphosphate.

It catalyses the reaction D-glyceraldehyde 3-phosphate + pyruvate + H(+) = 1-deoxy-D-xylulose 5-phosphate + CO2. The protein operates within metabolic intermediate biosynthesis; 1-deoxy-D-xylulose 5-phosphate biosynthesis; 1-deoxy-D-xylulose 5-phosphate from D-glyceraldehyde 3-phosphate and pyruvate: step 1/1. Its function is as follows. Catalyzes the acyloin condensation reaction between C atoms 2 and 3 of pyruvate and glyceraldehyde 3-phosphate to yield 1-deoxy-D-xylulose-5-phosphate (DXP). This chain is 1-deoxy-D-xylulose-5-phosphate synthase, found in Gluconobacter oxydans (strain 621H) (Gluconobacter suboxydans).